A 331-amino-acid chain; its full sequence is Biotin synthase (331 aa).

Positions 52–277 (PDVEVEGIIS…RTMLRFAGGR (226 aa)) constitute a Radical SAM core domain. Residues Cys67, Cys71, and Cys74 each coordinate [4Fe-4S] cluster. [2Fe-2S] cluster-binding residues include Cys110, Cys143, Cys202, and Arg272.

It belongs to the radical SAM superfamily. Biotin synthase family. Homodimer. It depends on [4Fe-4S] cluster as a cofactor. [2Fe-2S] cluster is required as a cofactor.

The enzyme catalyses (4R,5S)-dethiobiotin + (sulfur carrier)-SH + 2 reduced [2Fe-2S]-[ferredoxin] + 2 S-adenosyl-L-methionine = (sulfur carrier)-H + biotin + 2 5'-deoxyadenosine + 2 L-methionine + 2 oxidized [2Fe-2S]-[ferredoxin]. It participates in cofactor biosynthesis; biotin biosynthesis; biotin from 7,8-diaminononanoate: step 2/2. In terms of biological role, catalyzes the conversion of dethiobiotin (DTB) to biotin by the insertion of a sulfur atom into dethiobiotin via a radical-based mechanism. This chain is Biotin synthase, found in Mycolicibacterium gilvum (strain PYR-GCK) (Mycobacterium gilvum (strain PYR-GCK)).